Reading from the N-terminus, the 1136-residue chain is DNA-directed RNA polymerase I subunit RPA2 (1136 aa).

The tract at residues 1 to 24 (MDPGSRWRNLPSGPSLKHLTDPSY) is disordered. RNA is bound at residue R180. The interval 194 to 208 (VRPKWKTRGPGYTHY) is loop B. The segment at 236–247 (LNFIYRKELFFL) is loop A. D367 lines the RNA pocket. Fork loop stretches follow at residues 439-453 (LRSK…DSGL) and 474-489 (RGAD…VRRL). K890 contributes to the RNA binding site. The DNA site is built by R1020 and R1036. S1051 carries the phosphoserine modification. Residues C1071, C1074, C1099, and C1102 each contribute to the Zn(2+) site. A C4-type zinc finger spans residues 1071 to 1102 (CVKCGSLLSPLLEKPPPSWSAMRNRKYNCTLC).

The protein belongs to the RNA polymerase beta chain family. Component of the RNA polymerase I (Pol I) complex consisting of 13 subunits: a ten-subunit catalytic core composed of POLR1A/RPA1, POLR1B/RPA2, POLR1C/RPAC1, POLR1D/RPAC2, POLR1H/RPA12, POLR2E/RPABC1, POLR2F/RPABC2, POLR2H/RPABC3, POLR2K/RPABC4 and POLR2L/RPABC5; a mobile stalk subunit POLR1F/RPA43 protruding from the core and additional subunits homologous to general transcription factors POLR1E/RPA49 and POLR1G/RPA34. Part of Pol I pre-initiation complex (PIC), in which Pol I core assembles with RRN3 and promoter-bound UTBF and SL1/TIF-IB complex.

It localises to the nucleus. It is found in the nucleolus. Its subcellular location is the chromosome. It catalyses the reaction RNA(n) + a ribonucleoside 5'-triphosphate = RNA(n+1) + diphosphate. Functionally, catalytic core component of RNA polymerase I (Pol I), a DNA-dependent RNA polymerase which synthesizes ribosomal RNA precursors using the four ribonucleoside triphosphates as substrates. Transcribes 47S pre-rRNAs from multicopy rRNA gene clusters, giving rise to 5.8S, 18S and 28S ribosomal RNAs. Pol I-mediated transcription cycle proceeds through transcription initiation, transcription elongation and transcription termination stages. During transcription initiation, Pol I pre-initiation complex (PIC) is recruited by the selectivity factor 1 (SL1/TIF-IB) complex bound to the core promoter that precedes an rDNA repeat unit. The PIC assembly bends the promoter favoring the formation of the transcription bubble and promoter escape. Once the polymerase has escaped from the promoter it enters the elongation phase during which RNA is actively polymerized, based on complementarity with the template DNA strand. Highly processive, assembles in structures referred to as 'Miller trees' where many elongating Pol I complexes queue and transcribe the same rDNA coding regions. At terminator sequences downstream of the rDNA gene, PTRF interacts with Pol I and halts Pol I transcription leading to the release of the RNA transcript and polymerase from the DNA. Forms Pol I active center together with the largest subunit POLR1A/RPA1. Appends one nucleotide at a time to the 3' end of the nascent RNA, with POLR1A/RPA1 contributing a Mg(2+)-coordinating DxDGD motif, and POLR1B/RPA2 providing lysine residues believed to facilitate Watson-Crick base pairing between the incoming nucleotide and the template base. Typically, Mg(2+) ions direct a 5' nucleoside triphosphate to form a phosphodiester bond with the 3' hydroxyl of the preceding nucleotide of the nascent RNA, with the elimination of pyrophosphate. Has proofreading activity: Pauses and backtracks to allow the cleavage of a missincorporated nucleotide via POLR1H/RPA12. High Pol I processivity is associated with decreased transcription fidelity. This Pongo abelii (Sumatran orangutan) protein is DNA-directed RNA polymerase I subunit RPA2 (POLR1B).